Here is a 271-residue protein sequence, read N- to C-terminus: Insulin-like growth factor-binding protein 5 (271 aa).

The signal sequence occupies residues 1-19 (MVLTAVLLLLAACAGPAQG). An IGFBP N-terminal domain is found at 22–102 (SFVHCEPCDE…LHGRGVCLNE (81 aa)). 6 disulfide bridges follow: cysteine 26–cysteine 52, cysteine 29–cysteine 54, cysteine 37–cysteine 55, cysteine 44–cysteine 58, cysteine 66–cysteine 79, and cysteine 73–cysteine 99. The span at 109–121 (AKIERDSREHEEP) shows a compositional bias: basic and acidic residues. The segment at 109–129 (AKIERDSREHEEPTTSEMAEE) is disordered. Serine 115 carries the phosphoserine modification. The 75-residue stretch at 188–262 (QGPCRRHMEA…MEYVDGDFQC (75 aa)) folds into the Thyroglobulin type-1 domain. Disulfide bonds link cysteine 191-cysteine 218, cysteine 229-cysteine 240, and cysteine 242-cysteine 262.

In terms of assembly, interacts with IGF1; this interaction enhances the growth stimulatory effects of IGF1 on fibroblasts. Interacts with CAV1; this interaction allows trafficking of IGFBP5 from the plasma membrane to the nucleus. Interacts with NCL; this interaction is necessary for IGFBP5 localization to the nucleus.

It localises to the secreted. The protein localises to the cytoplasm. Its subcellular location is the nucleus. Its function is as follows. Multifunctional protein that plays a critical role in regulating the availability of IGFs to their receptors and thereby regulates IGF-mediated cellular processes including proliferation, differentiation, and apoptosis in a cell-type specific manner. Increases the cell proliferation of osteoblasts, intestinal smooth muscle cells and neuroblastoma cells. Enhances adhesion and survival of epithelial cells but decreases adhesion of mesenchymal cells. Once secreted, acts as a major mediator of mTORC1-dependent feedback inhibition of IGF1 signaling. Also plays a role in the induction of extracellular matrix (ECM) production and deposition independently of its nuclear translocation and binding to IGFs. Acts itself as a growth factor that can act independently of IGFs to regulate bone formation. Acts as a ligand for the ROR1 receptor which triggers formation of ROR1/HER2 heterodimer to enhance CREB oncogenic signaling. The protein is Insulin-like growth factor-binding protein 5 (IGFBP5) of Sus scrofa (Pig).